The following is a 291-amino-acid chain: Proline iminopeptidase (291 aa).

Positions leucine 30–aspartate 274 constitute an AB hydrolase-1 domain. Serine 103 functions as the Nucleophile in the catalytic mechanism. The active site involves aspartate 242. Histidine 269 serves as the catalytic Proton donor.

Belongs to the peptidase S33 family.

It localises to the cell envelope. The enzyme catalyses Release of N-terminal proline from a peptide.. Functionally, releases the N-terminal proline from various substrates. The polypeptide is Proline iminopeptidase (Lacticaseibacillus rhamnosus (strain Lc 705) (Lactobacillus rhamnosus)).